The following is a 927-amino-acid chain: Non-lysosomal glucosylceramidase (927 aa).

Residues 32-62 are disordered; sequence EETGGTKDVQVTDCKSPEDSRPPKETDCCNP. The segment covering 46–58 has biased composition (basic and acidic residues); it reads KSPEDSRPPKETD.

Belongs to the non-lysosomal glucosylceramidase family. In terms of tissue distribution, widely expressed. Mainly expressed in brain, heart, skeletal muscle, kidney and placenta and expressed at lower levels in liver, spleen, small intestine and lung. Detectable in colon, thymus and peripheral blood leukocytes.

Its subcellular location is the endoplasmic reticulum membrane. The protein localises to the golgi apparatus membrane. It carries out the reaction a beta-D-glucosyl-(1&lt;-&gt;1')-N-acylsphing-4-enine + H2O = an N-acylsphing-4-enine + D-glucose. The enzyme catalyses a beta-D-galactosyl-(1&lt;-&gt;1')-N-acylsphing-4-enine + H2O = an N-acylsphing-4-enine + D-galactose. It catalyses the reaction beta-D-glucosyl-(1-&gt;3)-O-lithocholate + H2O = lithocholate + D-glucose. The catalysed reaction is beta-D-glucosyl-(1-&gt;3)-O-chenodeoxycholate + H2O = chenodeoxycholate + D-glucose. It carries out the reaction a di-trans,poly-cis-dolichyl beta-D-glucosyl phosphate + chenodeoxycholate = beta-D-glucosyl-(1-&gt;3)-O-chenodeoxycholate + a di-trans,poly-cis-dolichyl phosphate + H(+). The enzyme catalyses octyl beta-D-glucose + chenodeoxycholate = beta-D-glucosyl-(1-&gt;3)-O-chenodeoxycholate + octan-1-ol. It catalyses the reaction cholesteryl 3-beta-D-glucoside + H2O = cholesterol + D-glucose. The catalysed reaction is a beta-D-glucosyl-(1&lt;-&gt;1')-N-acylsphing-4-enine + cholesterol = cholesteryl 3-beta-D-glucoside + an N-acylsphing-4-enine. It carries out the reaction beta-D-glucosyl-N-(9Z-octadecenoyl)-sphing-4E-enine + cholesterol = N-(9Z-octadecenoyl)-sphing-4-enine + cholesteryl 3-beta-D-glucoside. The enzyme catalyses a beta-D-galactosyl-(1&lt;-&gt;1')-N-acylsphing-4-enine + cholesterol = cholesteryl 3-beta-D-galactoside + an N-acylsphing-4-enine. It catalyses the reaction 1-(beta-D-galactosyl)-N-dodecanoylsphing-4-enine + cholesterol = cholesteryl 3-beta-D-galactoside + N-dodecanoylsphing-4-enine. Its pathway is lipid metabolism; sphingolipid metabolism. It participates in steroid metabolism; cholesterol metabolism. With respect to regulation, inhibited by AMP-DMN/N -((5-adamantane-1-yl-methoxy)pentyl)-deoxynojirimycin. Activated by Mn(2+), Co(2+) and Mg(2+) and inhibited by Zn(2+). Enzymatic activity is dependent on membrane association and requires the presence of lipids. The membrane-associated enzyme is not inhibited by condutiriol B epoxide and bromocondutiriol B epoxide. Its function is as follows. Non-lysosomal glucosylceramidase that catalyzes the hydrolysis of glucosylceramides/GlcCers (such as beta-D-glucosyl-(1&lt;-&gt;1')-N-acylsphing-4-enine) to free glucose and ceramides (such as N-acylsphing-4-enine). GlcCers are membrane glycosphingolipids that have a wide intracellular distribution. They are the main precursors of more complex glycosphingolipids that play a role in cellular growth, differentiation, adhesion, signaling, cytoskeletal dynamics and membrane properties. Involved in the transglucosylation of cholesterol, transfers glucose from GlcCer to cholesterol, thereby modifying its water solubility and biological properties. Under specific conditions, may catalyze the reverse reaction, transferring glucose from cholesteryl-3-beta-D-glucoside to ceramide (such as N-acylsphing-4-enine). May play a role in the metabolism of bile acids. Able to hydrolyze bile acid 3-O-glucosides as well as to produce bile acid-glucose conjugates thanks to a bile acid glucosyl transferase activity. Catalyzes the hydrolysis of galactosylceramides/GalCers (such as beta-D-galactosyl-(1&lt;-&gt;1')-N-acylsphing-4-enine), as well as the galactosyl transfer between GalCers and cholesterol in vitro with lower activity compared with their activity against GlcCers. The protein is Non-lysosomal glucosylceramidase of Homo sapiens (Human).